We begin with the raw amino-acid sequence, 227 residues long: Cytochrome c oxidase subunit 2 (227 aa).

Residues 1 to 14 (MAYPFQLGLQDATS) are Mitochondrial intermembrane-facing. A helical membrane pass occupies residues 15-45 (PIMEELLHFHDHTLMIVFLISSLVLYIISLM). At 46-59 (LTTKLTHTSTMDAQ) the chain is on the mitochondrial matrix side. A helical transmembrane segment spans residues 60-87 (EVETVWTILPAIILILIALPSLRILYMM). At 88-227 (DEINNPSLTV…YFETWSALMV (140 aa)) the chain is on the mitochondrial intermembrane side. 6 residues coordinate Cu cation: His-161, Cys-196, Glu-198, Cys-200, His-204, and Met-207. Glu-198 lines the Mg(2+) pocket. Tyr-218 carries the post-translational modification Phosphotyrosine.

It belongs to the cytochrome c oxidase subunit 2 family. As to quaternary structure, component of the cytochrome c oxidase (complex IV, CIV), a multisubunit enzyme composed of 14 subunits. The complex is composed of a catalytic core of 3 subunits MT-CO1, MT-CO2 and MT-CO3, encoded in the mitochondrial DNA, and 11 supernumerary subunits COX4I, COX5A, COX5B, COX6A, COX6B, COX6C, COX7A, COX7B, COX7C, COX8 and NDUFA4, which are encoded in the nuclear genome. The complex exists as a monomer or a dimer and forms supercomplexes (SCs) in the inner mitochondrial membrane with NADH-ubiquinone oxidoreductase (complex I, CI) and ubiquinol-cytochrome c oxidoreductase (cytochrome b-c1 complex, complex III, CIII), resulting in different assemblies (supercomplex SCI(1)III(2)IV(1) and megacomplex MCI(2)III(2)IV(2)). Found in a complex with TMEM177, COA6, COX18, COX20, SCO1 and SCO2. Interacts with TMEM177 in a COX20-dependent manner. Interacts with COX20. Interacts with COX16. Cu cation serves as cofactor.

Its subcellular location is the mitochondrion inner membrane. It catalyses the reaction 4 Fe(II)-[cytochrome c] + O2 + 8 H(+)(in) = 4 Fe(III)-[cytochrome c] + 2 H2O + 4 H(+)(out). In terms of biological role, component of the cytochrome c oxidase, the last enzyme in the mitochondrial electron transport chain which drives oxidative phosphorylation. The respiratory chain contains 3 multisubunit complexes succinate dehydrogenase (complex II, CII), ubiquinol-cytochrome c oxidoreductase (cytochrome b-c1 complex, complex III, CIII) and cytochrome c oxidase (complex IV, CIV), that cooperate to transfer electrons derived from NADH and succinate to molecular oxygen, creating an electrochemical gradient over the inner membrane that drives transmembrane transport and the ATP synthase. Cytochrome c oxidase is the component of the respiratory chain that catalyzes the reduction of oxygen to water. Electrons originating from reduced cytochrome c in the intermembrane space (IMS) are transferred via the dinuclear copper A center (CU(A)) of subunit 2 and heme A of subunit 1 to the active site in subunit 1, a binuclear center (BNC) formed by heme A3 and copper B (CU(B)). The BNC reduces molecular oxygen to 2 water molecules using 4 electrons from cytochrome c in the IMS and 4 protons from the mitochondrial matrix. This chain is Cytochrome c oxidase subunit 2 (MT-CO2), found in Canis adustus (Side-striped jackal).